Reading from the N-terminus, the 222-residue chain is Peroxisomal membrane protein 11-4 (222 aa).

Residues 1 to 81 (MSAGDTLDKL…LNGLRRAPGE (81 aa)) are Cytoplasmic-facing. Residues 82-102 (FGALAVLANAGEMVYFFFDHF) traverse the membrane as a helical segment. Residues 103 to 196 (TWLSRVGVLD…IGIADIEPNP (94 aa)) are Lumenal-facing. The chain crosses the membrane as a helical span at residues 197-217 (FCNHAVTLGISGLVSAWAGWY). The Cytoplasmic portion of the chain corresponds to 218 to 222 (RNWPS).

Belongs to the peroxin-11 family. As to expression, expressed in seedlings, shoots, leaf sheaths and flag leaf.

Its subcellular location is the peroxisome membrane. In terms of biological role, involved in peroxisomal proliferation. The polypeptide is Peroxisomal membrane protein 11-4 (PEX11-4) (Oryza sativa subsp. indica (Rice)).